Here is a 420-residue protein sequence, read N- to C-terminus: Phosphoglycerate kinase, cytosolic (420 aa).

V23, D24, F25, N26, R39, S61, H62, G64, R65, R135, H171, and R172 together coordinate (2R)-3-phosphoglycerate. Positions 217 and 218 each coordinate ADP. A CDP-binding site is contributed by G217. The AMP site is built by A218 and K219. A218 serves as a coordination point for ATP. A218 contributes to the Mg(2+) binding site. K219 lines the (2R)-3-phosphoglycerate pocket. D222 contacts CDP. D222 is a Mg(2+) binding site. K223 and G241 together coordinate ADP. K223 is an AMP binding site. K223 serves as a coordination point for ATP. G241 is a CDP binding site. The AMP site is built by A242 and A314. A242 and A314 together coordinate ATP. ADP contacts are provided by A314 and N338. G339 and F344 together coordinate CDP. ADP is bound by residues F344, E345, E377, and S378. E345 contributes to the AMP binding site. 3 residues coordinate ATP: E345, E377, and S378. E377 is a Mg(2+) binding site.

It belongs to the phosphoglycerate kinase family. Monomer. It depends on Mg(2+) as a cofactor.

The protein localises to the cytoplasm. It catalyses the reaction (2R)-3-phosphoglycerate + ATP = (2R)-3-phospho-glyceroyl phosphate + ADP. The protein operates within carbohydrate degradation; glycolysis; pyruvate from D-glyceraldehyde 3-phosphate: step 2/5. This is Phosphoglycerate kinase, cytosolic from Trypanosoma brucei brucei.